Consider the following 307-residue polypeptide: Ribosomal RNA small subunit methyltransferase H (307 aa).

Residues 32-34, Asp52, Phe78, Asp99, and Gln106 contribute to the S-adenosyl-L-methionine site; that span reads GGH. The segment at 287–307 is disordered; it reads KEEIESNKRSHSAKLRVAEKV.

This sequence belongs to the methyltransferase superfamily. RsmH family.

Its subcellular location is the cytoplasm. It catalyses the reaction cytidine(1402) in 16S rRNA + S-adenosyl-L-methionine = N(4)-methylcytidine(1402) in 16S rRNA + S-adenosyl-L-homocysteine + H(+). Specifically methylates the N4 position of cytidine in position 1402 (C1402) of 16S rRNA. This Caldicellulosiruptor bescii (strain ATCC BAA-1888 / DSM 6725 / KCTC 15123 / Z-1320) (Anaerocellum thermophilum) protein is Ribosomal RNA small subunit methyltransferase H.